Reading from the N-terminus, the 255-residue chain is Probable septum site-determining protein MinC (255 aa).

Over residues S103 to E115 the composition is skewed to basic and acidic residues. A disordered region spans residues S103–P136. Pro residues predominate over residues V127–P136.

The protein belongs to the MinC family. As to quaternary structure, interacts with MinD and FtsZ.

Functionally, cell division inhibitor that blocks the formation of polar Z ring septums. Rapidly oscillates between the poles of the cell to destabilize FtsZ filaments that have formed before they mature into polar Z rings. Prevents FtsZ polymerization. This chain is Probable septum site-determining protein MinC, found in Ralstonia nicotianae (strain ATCC BAA-1114 / GMI1000) (Ralstonia solanacearum).